Here is a 487-residue protein sequence, read N- to C-terminus: Arginine ADP-riboxanase CopC (487 aa).

Over residues Met-1–Lys-12 the composition is skewed to polar residues. The interval Met-1–Gly-27 is disordered. NAD(+) is bound by residues His-137, Gln-138, Ser-139, Leu-143, Ala-150, Ala-152, Asn-154, and Leu-157. A nicotinamide-binding site is contributed by His-137. Ser-139 and Leu-143 together coordinate ADP-D-ribose. Positions 152, 154, 157, 166, 167, 168, and 183 each coordinate ADP-D-ribose. Asn-167 contributes to the NAD(+) binding site. Residue Phe-183 participates in NAD(+) binding. Positions 183, 184, 202, and 207 each coordinate nicotinamide. His-202 provides a ligand contact to NAD(+). 2 residues coordinate ADP-D-ribose: Phe-207 and Asp-230. Residues Asp-230 and Glu-325 each contribute to the NAD(+) site. Glu-325 is a nicotinamide binding site. Residue Glu-325 is part of the active site. ANK repeat units follow at residues Asp-368 to Asp-398 and Ser-444 to Glu-476.

The protein belongs to the OspC family. Interacts with host calmodulin (CALM1, CALM2 and/or CALM3); specifically interacts with the apo form of calmodulin and calmodulin-binding is required to mediate arginine ADP-riboxanation of host caspases.

Its subcellular location is the secreted. The protein localises to the host cytoplasm. The catalysed reaction is L-arginyl-[protein] + NAD(+) = ADP-riboxanated L-argininyl-[protein] + nicotinamide + NH4(+) + H(+). Interaction with host calmodulin (CALM1, CALM2 and/or CALM3) is required to mediate arginine ADP-riboxanation of host caspases. ADP-riboxanase effector that inhibits host cell programmed cell death. Acts by mediating arginine ADP-riboxanation of host caspases (CASP3, CASP7, CASP8 and CASP9), blocking their processing and activation. ADP-riboxanation of host apoptotic caspases (CASP3, CASP7, CASP8 and CASP9) prevents their activation, thereby inhibiting host cell apoptosis. ADP-riboxanation of host CASP8 also inhibits host cell necroptosis. ADP-riboxanation of host CASP3 also abolishes pyroptosis by preventing its ability to cleave GSDME. May also able to inactivate CASP4/CASP11, blocking inhibiting LPS-induced pyroptosis; however this activity is unsure in vivo. ADP-riboxanation takes place in several steps: CopC first binds host caspases and NAD(+); NAD(+) is hydrolyzed to nicotinamide and ADP-D-ribose. CopC then transfers the ADP-D-ribose to the modified arginine of caspases and forms the ADP-D-ribose-deacylization on arginine, leading to deamination to remove one N-omega group on target arginine. The polypeptide is Arginine ADP-riboxanase CopC (Chromobacterium violaceum (strain ATCC 12472 / DSM 30191 / JCM 1249 / CCUG 213 / NBRC 12614 / NCIMB 9131 / NCTC 9757 / MK)).